Consider the following 550-residue polypeptide: CTP synthase (550 aa).

Residues 1–270 (MTKFVFVTGG…DRLICEELRL (270 aa)) form an amidoligase domain region. Ser13 contacts CTP. Position 13 (Ser13) interacts with UTP. ATP contacts are provided by residues 14 to 19 (SLGKGI) and Asp71. Mg(2+) is bound by residues Asp71 and Glu144. CTP contacts are provided by residues 151-153 (DIE), 191-196 (KTKPTQ), and Lys227. Residues 191–196 (KTKPTQ) and Lys227 each bind UTP. The Glutamine amidotransferase type-1 domain maps to 295–547 (TIGMVGKYVD…VEAALASQQR (253 aa)). Position 356 (Gly356) interacts with L-glutamine. Cys383 acts as the Nucleophile; for glutamine hydrolysis in catalysis. Residues 384 to 387 (LGMQ), Glu407, and Arg473 contribute to the L-glutamine site. Residues His520 and Glu522 contribute to the active site.

It belongs to the CTP synthase family. In terms of assembly, homotetramer.

The enzyme catalyses UTP + L-glutamine + ATP + H2O = CTP + L-glutamate + ADP + phosphate + 2 H(+). It carries out the reaction L-glutamine + H2O = L-glutamate + NH4(+). The catalysed reaction is UTP + NH4(+) + ATP = CTP + ADP + phosphate + 2 H(+). It participates in pyrimidine metabolism; CTP biosynthesis via de novo pathway; CTP from UDP: step 2/2. Allosterically activated by GTP, when glutamine is the substrate; GTP has no effect on the reaction when ammonia is the substrate. The allosteric effector GTP functions by stabilizing the protein conformation that binds the tetrahedral intermediate(s) formed during glutamine hydrolysis. Inhibited by the product CTP, via allosteric rather than competitive inhibition. Its function is as follows. Catalyzes the ATP-dependent amination of UTP to CTP with either L-glutamine or ammonia as the source of nitrogen. Regulates intracellular CTP levels through interactions with the four ribonucleotide triphosphates. This chain is CTP synthase, found in Cupriavidus necator (strain ATCC 17699 / DSM 428 / KCTC 22496 / NCIMB 10442 / H16 / Stanier 337) (Ralstonia eutropha).